We begin with the raw amino-acid sequence, 450 residues long: 23S rRNA (uracil(1939)-C(5))-methyltransferase RlmD (450 aa).

Positions Ser-12–Lys-70 constitute a TRAM domain. Residues Cys-83, Cys-89, Cys-92, and Cys-171 each contribute to the [4Fe-4S] cluster site. Residues Gln-283, Phe-312, Asn-317, Glu-333, Asp-360, and Asp-380 each coordinate S-adenosyl-L-methionine. Cys-406 acts as the Nucleophile in catalysis.

Belongs to the class I-like SAM-binding methyltransferase superfamily. RNA M5U methyltransferase family. RlmD subfamily.

The enzyme catalyses uridine(1939) in 23S rRNA + S-adenosyl-L-methionine = 5-methyluridine(1939) in 23S rRNA + S-adenosyl-L-homocysteine + H(+). Functionally, catalyzes the formation of 5-methyl-uridine at position 1939 (m5U1939) in 23S rRNA. The polypeptide is 23S rRNA (uracil(1939)-C(5))-methyltransferase RlmD (Shewanella baltica (strain OS155 / ATCC BAA-1091)).